Here is a 39-residue protein sequence, read N- to C-terminus: Omega-actinopoditoxin-Mb1a (39 aa).

Cystine bridges form between C4–C19, C11–C30, and C18–C38.

In terms of processing, contains 3 disulfide bonds. Expressed by the venom gland.

It localises to the secreted. Its function is as follows. Potent inhibitor of insect, but not mammalian, voltage-gated calcium channels (Cav). The polypeptide is Omega-actinopoditoxin-Mb1a (Missulena bradleyi (Eastern mouse spider)).